The chain runs to 303 residues: Probable 5-dehydro-4-deoxyglucarate dehydratase (303 aa).

It belongs to the DapA family.

It carries out the reaction 5-dehydro-4-deoxy-D-glucarate + H(+) = 2,5-dioxopentanoate + CO2 + H2O. It functions in the pathway carbohydrate acid metabolism; D-glucarate degradation; 2,5-dioxopentanoate from D-glucarate: step 2/2. This is Probable 5-dehydro-4-deoxyglucarate dehydratase from Acinetobacter baumannii (strain SDF).